The sequence spans 247 residues: 3,4-dihydroxy-2-butanone 4-phosphate synthase (247 aa).

Residues 38 to 39 (RE), Asp43, 179 to 183 (RMGQT), and Glu203 contribute to the D-ribulose 5-phosphate site. Residue Glu39 coordinates Mg(2+).

Belongs to the DHBP synthase family. In terms of assembly, homodimer. Mg(2+) serves as cofactor. The cofactor is Mn(2+).

It catalyses the reaction D-ribulose 5-phosphate = (2S)-2-hydroxy-3-oxobutyl phosphate + formate + H(+). It participates in cofactor biosynthesis; riboflavin biosynthesis; 2-hydroxy-3-oxobutyl phosphate from D-ribulose 5-phosphate: step 1/1. Functionally, catalyzes the conversion of D-ribulose 5-phosphate to formate and 3,4-dihydroxy-2-butanone 4-phosphate. The polypeptide is 3,4-dihydroxy-2-butanone 4-phosphate synthase (Methanosarcina acetivorans (strain ATCC 35395 / DSM 2834 / JCM 12185 / C2A)).